Consider the following 467-residue polypeptide: Flagellar hook-associated protein 2 (467 aa).

Positions 411–439 (VNATLKSLTKQYLSVSNSIDETVARYKAQ) form a coiled coil.

This sequence belongs to the FliD family. As to quaternary structure, homopentamer.

It is found in the secreted. The protein resides in the bacterial flagellum. Its function is as follows. Required for the morphogenesis and for the elongation of the flagellar filament by facilitating polymerization of the flagellin monomers at the tip of growing filament. Forms a capping structure, which prevents flagellin subunits (transported through the central channel of the flagellum) from leaking out without polymerization at the distal end. This Salmonella typhimurium (strain LT2 / SGSC1412 / ATCC 700720) protein is Flagellar hook-associated protein 2 (fliD).